Consider the following 108-residue polypeptide: Precursor of CEP16 (108 aa).

The N-terminal stretch at 1–27 is a signal peptide; it reads MVMAKNLTKFYVVFLVVLMMVVSLLLA. Residues 28–92 constitute a propeptide that is removed on maturation; the sequence is IEGRPVKDSS…VGHHRAKGYK (65 aa). N-linked (GlcNAc...) asparagine glycans are attached at residues N50 and N98. A disordered region spans residues 76 to 108; sequence QSGPSPGVGHHRAKGYKMFGRANDSGPSPGVGH. Hydroxyproline is present on residues P102 and P104.

The protein belongs to the C-terminally encoded plant signaling peptide (CEP) family. In terms of assembly, interacts with CEP receptors (e.g. CEPR1 and CEPR2). In terms of processing, the mature small signaling peptide is generated by proteolytic processing of the longer precursor.

The protein resides in the secreted. Its subcellular location is the extracellular space. It localises to the apoplast. Extracellular signaling peptide that may regulate primary root growth rate and systemic nitrogen (N)-demand signaling. This is Precursor of CEP16 from Arabidopsis thaliana (Mouse-ear cress).